We begin with the raw amino-acid sequence, 774 residues long: Mastermind-like domain-containing protein 1 (774 aa).

Disordered regions lie at residues 257–279 (STGI…SSMA), 310–365 (LAAS…PQSL), 386–421 (ALLS…QPQF), 442–473 (HLMS…QQSF), 525–609 (GMAS…QPDH), 656–678 (PQHQ…VSPS), and 755–774 (LPSC…GNDP). Positions 331–361 (LPPPGLSPPYRPVPSPHPPPLPLPPPPPPFS) are enriched in pro residues. Over residues 386-397 (ALLSSMTSSSNA) the composition is skewed to polar residues. Positions 574 to 609 (QQPTPTQASSATASSTATATLQLQQQQQQQQQQPDH) are enriched in low complexity. Residues 656 to 669 (PQHQHGNSFTSRQD) show a composition bias toward polar residues. Serine 676 is subject to Phosphoserine.

Belongs to the mastermind family. In terms of tissue distribution, expressed in fetal brain, fetal ovary and fetal testis. Expressed in adult brain, ovary, skin, testis, uterus. Highly expressed in skeletal muscle.

It is found in the nucleus. Transactivates the HES3 promoter independently of NOTCH proteins. HES3 is a non-canonical NOTCH target gene which lacks binding sites for RBPJ. In Homo sapiens (Human), this protein is Mastermind-like domain-containing protein 1 (MAMLD1).